A 1434-amino-acid polypeptide reads, in one-letter code: MKDLLKFLKAQSKTEEFDGIKIGLASPDMIRSWSFGEVKKPETINYRTFKPERDGLFCARIFGPVKDYECLCGKYKRLKHRGVICEKCGVEVTQTKVRRERMGHIELASPVAHIWFLKSLPSRIGLLLDMTLRDIERVLYFESFVVVDAGMTSLERSQMLTEEQYLDALEEYGDEFDAKMGAEAILALLRAQDLEHEIATMREELSQTNSETKRKKTTKRLKLMESFLQSGNKPEWMIMTVLPVLPPDLRPLVPLDGGRFATSDLNDLYRRVINRNNRLKRLLDLAAPDIIVRNEKRMLQEAVDALLDNGRRGRAITGSNKRPLKSLADMIKGKQGRFRQNLLGKRVDYSGRSVITVGPTLRLHQCGLPKKMALELFKPFIYGKLETRGLATTIKAAKKMVEREEAVVWDILDEVIREHPVMLNRAPTLHRLGIQAFEPILIEGKAIQLHPLVCSAFNADFDGDQMAVHLPLTLEAQLEARALMMSTNNILSPASGEPIIVPSQDVVLGLYYMTRSCVGAKGEGMVLSGAKEAEKIYRAGLASLHARVKCRITEYVKNEAGELVPKIELKNTTVGRAILSLILPKGMEYALIDPPLPMTEAGKAELAEHPERWIKYVSNQAMGKKQISKVLNTCYRKQGLKDTVIFADQLMYTGFHYAALSGSSVGIDDMVIPDAKKDIIAAAEAEVAEIQEQFQSGLVTAGERYNKVIDIWASANERVSKAMMENLSKETRQNSLGEDEVQASFNSVFMMADSGARGSAAQIRQLAGMRGLMAKPDGSIIETPIVANFREGLNVLQYFISTHGARKGLADTALKTANSGYLTRRLVDVAQDVVITELDCGTSEGLWMTPLIEGGDVVEPLRERVLGRVVAEDVLKPGTEDVLVARNTLLDEQWCNTLERNSVDRVKVRSAIACESDFGICAHCYGRDLARGHLVNNGEATGVIAAQSIGEPGTQLTMRTFHIGGAASRAAAESSASVKNTGVIKLQNAKSVENSAGKLVITSRSSELTIMDELGRTKESHKLPYGSVLEVKDGQAVKAGEIVANWDPHTHPIITEVAGRIQFENMIEGITITRQTDELTGLSSIVVLDVNERTTTGKELRPTVKLVDANGKDVLIPGTDVAAQYFLPGQAIVQLEDGAQVNVGDAVARIPQASSGTKDITGGLPRVADLFEARQPKEPAILAEISGTISFGKETKGKRRLVITPTDGGDAHEEMIPKWRNLNVFEGEKVQQGEVLADGPESAHDILRLRGISPVANYIVNEVQDVYRLQGVKINDKHIEVIVRQMLRKCEIVNPGDSDLLEGEQADVVRVKIANRKLVAEGKQPATFRRVLMGITKASLNTESFISAASFQETTRVLTEAAVSGKVDDLRGLKENVIVGRLIPAGTGFAYHHGRLEKRRQAAKAVVPVTQQATADEAEQNLADLLNAADNLNA.

Cys70, Cys72, Cys85, and Cys88 together coordinate Zn(2+). Mg(2+)-binding residues include Asp460, Asp462, and Asp464. Zn(2+) is bound by residues Cys840, Cys914, Cys921, and Cys924.

Belongs to the RNA polymerase beta' chain family. The RNAP catalytic core consists of 2 alpha, 1 beta, 1 beta' and 1 omega subunit. When a sigma factor is associated with the core the holoenzyme is formed, which can initiate transcription. Mg(2+) is required as a cofactor. It depends on Zn(2+) as a cofactor.

It carries out the reaction RNA(n) + a ribonucleoside 5'-triphosphate = RNA(n+1) + diphosphate. In terms of biological role, DNA-dependent RNA polymerase catalyzes the transcription of DNA into RNA using the four ribonucleoside triphosphates as substrates. The polypeptide is DNA-directed RNA polymerase subunit beta' (Tolumonas auensis (strain DSM 9187 / NBRC 110442 / TA 4)).